A 457-amino-acid chain; its full sequence is MRPPSPLPARWLCVLAGALAWALGPAGGQAARLQEECDYVQMIEVQHKQCLEEAQLENETIGCSKMWDNLTCWPATPRGQVVVLACPLIFKLFSSIQGRNVSRSCTDEGWTHLEPGPYPIACGLDDKAASLDEQQTMFYGSVKTGYTIGYGLSLATLLVATAILSLFRKLHCTRNYIHMHLFISFILRAAAVFIKDLALFDSGESDQCSEGSVGCKAAMVFFQYCVMANFFWLLVEGLYLYTLLAVSFFSERKYFWGYILIGWGVPSTFTMVWTIARIHFEDYGCWDTINSSLWWIIKGPILTSILVNFILFICIIRILLQKLRPPDIRKSDSSPYSRLARSTLLLIPLFGVHYIMFAFFPDNFKPEVKMVFELVVGSFQGFVVAILYCFLNGEVQAELRRKWRRWHLQGVLGWNPKYRHPSGGSNGATCSTQVSMLTRVSPGARRSSSFQAEVSLV.

An N-terminal signal peptide occupies residues 1–30 (MRPPSPLPARWLCVLAGALAWALGPAGGQA). Residues 31-141 (ARLQEECDYV…DEQQTMFYGS (111 aa)) lie on the Extracellular side of the membrane. Disulfide bonds link Cys37–Cys208, Cys50–Cys72, Cys63–Cys105, Cys86–Cys122, and Cys215–Cys285. Residues Asn58, Asn69, and Asn100 are each glycosylated (N-linked (GlcNAc...) asparagine). The chain crosses the membrane as a helical span at residues 142–166 (VKTGYTIGYGLSLATLLVATAILSL). Topologically, residues 167–174 (FRKLHCTR) are cytoplasmic. Residues 175–196 (NYIHMHLFISFILRAAAVFIKD) traverse the membrane as a helical segment. Residues 197–216 (LALFDSGESDQCSEGSVGCK) are Extracellular-facing. The chain crosses the membrane as a helical span at residues 217-241 (AAMVFFQYCVMANFFWLLVEGLYLY). The Cytoplasmic segment spans residues 242–254 (TLLAVSFFSERKY). The chain crosses the membrane as a helical span at residues 255-276 (FWGYILIGWGVPSTFTMVWTIA). Topologically, residues 277 to 291 (RIHFEDYGCWDTINS) are extracellular. Asn290 carries an N-linked (GlcNAc...) asparagine glycan. A helical membrane pass occupies residues 292 to 316 (SLWWIIKGPILTSILVNFILFICII). At 317-338 (RILLQKLRPPDIRKSDSSPYSR) the chain is on the cytoplasmic side. Residues 339–359 (LARSTLLLIPLFGVHYIMFAF) traverse the membrane as a helical segment. The Extracellular portion of the chain corresponds to 360–367 (FPDNFKPE). The helical transmembrane segment at 368 to 391 (VKMVFELVVGSFQGFVVAILYCFL) threads the bilayer. Residues 392-457 (NGEVQAELRR…SSFQAEVSLV (66 aa)) are Cytoplasmic-facing.

The protein belongs to the G-protein coupled receptor 2 family. As to quaternary structure, interacts with ADCYAP1/PACAP; activated by both PACAP27 and PACAP38 neuropeptides. Interacts with VIP; the interaction results in VIPR1 activation. In lung, HT-29 colonic epithelial cells, Raji B-lymphoblasts. Lesser extent in brain, heart, kidney, liver and placenta. Not expressed in CD4+ or CD8+ T-cells. Expressed in the T-cell lines HARRIS, HuT 78, Jurkat and SUP-T1, but not in the T-cell lines Peer, MOLT-4, HSB and YT.

The protein localises to the cell membrane. In terms of biological role, g protein-coupled receptor activated by the neuropeptides vasoactive intestinal peptide (VIP) and pituitary adenylate cyclase-activating polypeptide (ADCYAP1/PACAP). Binds VIP and both PACAP27 and PACAP38 bioactive peptides with the following order of ligand affinity VIP = PACAP27 &gt; PACAP38. Ligand binding causes a conformation change that triggers signaling via guanine nucleotide-binding proteins (G proteins) and modulates the activity of downstream effectors. Activates cAMP-dependent pathway. The chain is Vasoactive intestinal polypeptide receptor 1 from Homo sapiens (Human).